A 239-amino-acid chain; its full sequence is LexA repressor (239 aa).

Residues 26-46 constitute a DNA-binding region (H-T-H motif); sequence FDEMKEALDLASKSGIHRLIT. A disordered region spans residues 90–110; that stretch reads GSLGKTPPPPARPAPVATNDD. Catalysis depends on for autocatalytic cleavage activity residues S160 and K198.

Belongs to the peptidase S24 family. In terms of assembly, homodimer.

It carries out the reaction Hydrolysis of Ala-|-Gly bond in repressor LexA.. In terms of biological role, represses a number of genes involved in the response to DNA damage (SOS response), including recA and lexA. In the presence of single-stranded DNA, RecA interacts with LexA causing an autocatalytic cleavage which disrupts the DNA-binding part of LexA, leading to derepression of the SOS regulon and eventually DNA repair. This chain is LexA repressor, found in Brucella anthropi (strain ATCC 49188 / DSM 6882 / CCUG 24695 / JCM 21032 / LMG 3331 / NBRC 15819 / NCTC 12168 / Alc 37) (Ochrobactrum anthropi).